We begin with the raw amino-acid sequence, 47 residues long: Large ribosomal subunit protein eL40 (47 aa).

Belongs to the eukaryotic ribosomal protein eL40 family.

This Methanococcus aeolicus (strain ATCC BAA-1280 / DSM 17508 / OCM 812 / Nankai-3) protein is Large ribosomal subunit protein eL40.